The sequence spans 388 residues: MEEFTLDRNSNVGNLIALAVLNKFDELARHGKPIIRANGVREWTTLAGVVIQKKMENEFICVCLATGVKCTPAGIIKNEQLGSVLHDCHAEILALRCFNRLLLEHCILIKESKKDTWLLEVADNGKFTLNSNLLIHLYVSECPCGDASMELLASRLENNKPWNLTVDSEKLMRGRADFGLLGIVRTKPGRPDAPVSWSKSCTDKLAAKQYLSILNSQTSLICEPIYLSCVVLYKKVIVKSAIDRAFGPFGRCAPLAEFGEKDNPYYFHPFTVLETDENFLYSRPLNQAEKTATSTNVLIWIGDKMQCTQVIHNGIKAGTKAKDVEKSQTLICRKSMMNLLHQLSQSLTNEKNYYEWKKLNIKRCQQKQILRNILKNWIPNGGNEFQWI.

Positions 63-388 (CLATGVKCTP…PNGGNEFQWI (326 aa)) constitute an A to I editase domain. Zn(2+) is bound at residue His89. The active-site Proton donor is Glu91. Arg96 provides a ligand contact to 1D-myo-inositol hexakisphosphate. Zn(2+) is bound by residues Cys144 and Cys201. 1D-myo-inositol hexakisphosphate is bound by residues Lys204, Lys357, and Arg363.

Belongs to the ADAT1 family. Requires 1D-myo-inositol hexakisphosphate as cofactor. It depends on Zn(2+) as a cofactor.

The protein localises to the cytoplasm. It is found in the nucleus. It carries out the reaction adenosine(37) in tRNA(Ala) + H2O + H(+) = inosine(37) in tRNA(Ala) + NH4(+). Deaminates adenosine-37 to inosine in tRNA-Ala. The protein is tRNA-specific adenosine deaminase 1 of Schizosaccharomyces pombe (strain 972 / ATCC 24843) (Fission yeast).